A 165-amino-acid chain; its full sequence is Glutamyl-tRNA(Gln) amidotransferase subunit F, mitochondrial (165 aa).

The N-terminal 19 residues, 1 to 19 (MKSILRSTTRNLITSSRRF), are a transit peptide targeting the mitochondrion.

The protein belongs to the GatF family. Subunit of the heterotrimeric GatFAB amidotransferase (AdT) complex, composed of A, B and F subunits.

It localises to the mitochondrion inner membrane. The enzyme catalyses L-glutamyl-tRNA(Gln) + L-glutamine + ATP + H2O = L-glutaminyl-tRNA(Gln) + L-glutamate + ADP + phosphate + H(+). Allows the formation of correctly charged Gln-tRNA(Gln) through the transamidation of misacylated Glu-tRNA(Gln) in the mitochondria. The reaction takes place in the presence of glutamine and ATP through an activated gamma-phospho-Glu-tRNA(Gln). Required for proper protein synthesis within the mitochondrion. This chain is Glutamyl-tRNA(Gln) amidotransferase subunit F, mitochondrial, found in Candida albicans (strain SC5314 / ATCC MYA-2876) (Yeast).